Here is a 1764-residue protein sequence, read N- to C-terminus: MSNHSEAYGSRDQRREKYTQGKEFEDGTLETLESIISAVEDETLSKDYQPLIVFFQRGFGAQLVQTWSYYAQVNNHGKFSKTTSLLTKTLRVLSSDTSTVTIGSGLIRLILTDYTKVLYRGLNNMRAQLTNPILRLLKQIVNFNNGQHIEELVSYFDFSLPILPRLLVPSKSELANGNSSADSSKHDSLRFTFIKFWLTLISNASPFVRKELLTENFKIMSNLFKFMNKADSDKLSEHILSVFINDILKEKSFKRTTKTKILNELAASKIHHFYYSSNKNLVKKANEFFLTFGASRDFSVAFPDNCVWFKNSVADGASHGAPITVNQVEFQIHNKLLFNTLRLFKPWEDTLQLGTLIKILENVPELVAPYSIFLTTNGNYDPKMTSYWFGITLLINKIINLKIPQFMEKVDSNIPPATSLVIENILPSLLTKSSLVKSLQFETPIIRQLACQSIVLALKKLEKVSTFYDQKGWRNEKTILLNEFHTRIPDLPIFVSTLSNSLASNKDNRILPLSISIIFNYYSKMFPNLFSINLPSSNIYTDIMQKSKISGIEFAILDNYLQFQEFNSTQTRWWNPSSGGNSLFTLLLKLASSKNASNVITTRISNLLDELTRTNVIFNISLISPVMALVNSLQGLSLQVSEIDNMEQVWKWFDETISRVVKTPYKYVDMAKEYNYISPFIMCLSEQWKYVDKSGNPEFLIKWLILFLRNMIFIGEDHIGIDKLVKNVFPEVSDHDVNIYLKLDSFEENIKKTNSSNSLISSMKSSSFFQYISALPSKNLMNISRLPVNKLDAAGILFRVQLLVEDDSVVYDNWFEATACELTGKIASYMVTDTEFPIIKVLERYINFALPKLAIEKRNALLMKKSRFMCNLIGAVCFETGHQLVEFREIIQKVVFSGENVEEYANYNELYQKEDVNAFLTSVSEYLSTSALTSLLMCSTKLESTRNILQKLFNEGKTIKISLVKNILNKAANEDPASIKEVNISLAKFFEENKVCVDASSDPMGKLSLSETTSLINSFVSSDLNYLVLKAFYRWEHFSFPSFIPSIWRIKDSPLLSIVTTAALFKHMQDKDFSAFAHETISKYGNEIAKSTYTTSKSEIFDEILNMITTYIDFYDETKRNEILKCVLSQSDHKYHAATVRYIAAHNNFTYPGVETWLHKTLLYLTKYLSERKVISNSFFELLRAMAELLKLEEVPNKLNVKIINSQLEAILGSEWIKQIKVLEYVIVLIFCVSKKSIQSQRMVQLLLSNDSYSSIMIKDNDEDSSYRKFLSTMILFSLFSIDPVVNSTPIVQEKLLTFYSGTISSNDKLILKILETIESHTATSWTNMIFSWEFIKDEEEEILEAIGDTRLITKEREGLILTLQKNMIKKSIDRYVLERPQVPELYTDSNTNNYDATTRCDLVKKYYDDTERSGVDMYDPLFLLLLIIHNKELVKMVKDDEGNVTYRYEFENFLDCKIFQFIICSLSDCHTVANISYEHLSNLASSLEKKTAQMNLEKQITSKDNERKESDSDLIKYNSIYQVLIKRILYQRQQNQDPINPLIWFSISRIVDLLGSPTAPLHEKAYRWVLSNSTIRSWDIPMVSDVMMSYNKRQQDDNKKEIDMEIYYGELSWVLTTICKGIKTDEDYKMLEKKGVFEWLLNLINMPYLKERLRELIYFIFYKVQRVADDGGLNLISRNGIVSFFEVLNNNIKSRLPQDDILNNIGTLRNENRGTLNTTLRLAQEQNGIEKLLLGYNELVKSQKRLILWTEGDSDNVVKRLRK.

Residues 1-23 (MSNHSEAYGSRDQRREKYTQGKE) form a disordered region. The segment covering 9 to 23 (GSRDQRREKYTQGKE) has biased composition (basic and acidic residues).

In terms of assembly, associates with pre-60S ribosomal particles. Predominantly associated with the 27SA2 pre-rRNA. Can associate with a subset of box H/ACA and box C/D small nucleolar RNPs (snoRNPs) required for peptidyl transferase center modification and with small RNAs snR37 and snR42. Interacts with URB2. Together with DBP6, NOP8, URB2 and RSA3, forms an RNA-independent complex, which is required during early maturation of nascent 60S ribosomal subunits.

It is found in the nucleus. The protein localises to the nucleolus. Required for 60S ribosomal subunit formation and pre-rRNA processing. Required for normal accumulation of 25S and 5.8S rRNAs. This chain is Nucleolar pre-ribosomal-associated protein 1 (URB1), found in Saccharomyces cerevisiae (strain ATCC 204508 / S288c) (Baker's yeast).